The chain runs to 298 residues: tRNA dimethylallyltransferase (298 aa).

An ATP-binding site is contributed by 16–23; it reads GPTASGKS. Substrate is bound at residue 18 to 23; the sequence is TASGKS. 2 interaction with substrate tRNA regions span residues 41 to 44 and 165 to 169; these read DSMQ and QRIVR.

It belongs to the IPP transferase family. In terms of assembly, monomer. Mg(2+) is required as a cofactor.

The enzyme catalyses adenosine(37) in tRNA + dimethylallyl diphosphate = N(6)-dimethylallyladenosine(37) in tRNA + diphosphate. Functionally, catalyzes the transfer of a dimethylallyl group onto the adenine at position 37 in tRNAs that read codons beginning with uridine, leading to the formation of N6-(dimethylallyl)adenosine (i(6)A). The sequence is that of tRNA dimethylallyltransferase from Rhizobium radiobacter (Agrobacterium tumefaciens).